Reading from the N-terminus, the 395-residue chain is Univin (395 aa).

A signal peptide spans Met-1–Ser-19. Residues Ala-20–Arg-272 constitute a propeptide that is removed on maturation. A glycan (N-linked (GlcNAc...) asparagine) is linked at Asn-50. The disordered stretch occupies residues Glu-69 to Leu-97. Residues Asn-116 and Asn-336 are each glycosylated (N-linked (GlcNAc...) asparagine). Intrachain disulfides connect Cys-294–Cys-360, Cys-323–Cys-392, and Cys-327–Cys-394.

It belongs to the TGF-beta family. As to quaternary structure, homodimer; disulfide-linked.

The protein localises to the secreted. In terms of biological role, could have a critical role in early developmental decisions in the sea urchin embryo. This chain is Univin, found in Strongylocentrotus purpuratus (Purple sea urchin).